We begin with the raw amino-acid sequence, 186 residues long: Elongation factor P (186 aa).

This sequence belongs to the elongation factor P family.

It is found in the cytoplasm. It participates in protein biosynthesis; polypeptide chain elongation. Functionally, involved in peptide bond synthesis. Stimulates efficient translation and peptide-bond synthesis on native or reconstituted 70S ribosomes in vitro. Probably functions indirectly by altering the affinity of the ribosome for aminoacyl-tRNA, thus increasing their reactivity as acceptors for peptidyl transferase. The protein is Elongation factor P of Brucella abortus (strain S19).